The following is a 142-amino-acid chain: Hemoglobin subunit alpha-A (142 aa).

The Globin domain occupies 2–142 (VLSAADKTNV…VGTVLTAKYR (141 aa)). His59 serves as a coordination point for O2. His88 serves as a coordination point for heme b.

The protein belongs to the globin family. In terms of assembly, heterotetramer of two alpha chains and two beta chains. Red blood cells.

Its function is as follows. Involved in oxygen transport from the lung to the various peripheral tissues. The polypeptide is Hemoglobin subunit alpha-A (HBAA) (Anser anser anser (Western greylag goose)).